A 431-amino-acid chain; its full sequence is Adenylosuccinate synthetase (431 aa).

GTP contacts are provided by residues 12-18 (GDEGKGK) and 40-42 (GHT). The active-site Proton acceptor is D13. Residues D13 and G40 each contribute to the Mg(2+) site. IMP-binding positions include 13–16 (DEGK), 38–41 (NAGH), T128, R142, Q223, T238, and R301. The Proton donor role is filled by H41. 297-303 (TVTGRPR) contacts substrate. Residues R303, 329–331 (SID), and 411–413 (SVG) contribute to the GTP site.

This sequence belongs to the adenylosuccinate synthetase family. In terms of assembly, homodimer. Requires Mg(2+) as cofactor.

It is found in the cytoplasm. The enzyme catalyses IMP + L-aspartate + GTP = N(6)-(1,2-dicarboxyethyl)-AMP + GDP + phosphate + 2 H(+). The protein operates within purine metabolism; AMP biosynthesis via de novo pathway; AMP from IMP: step 1/2. Functionally, plays an important role in the de novo pathway of purine nucleotide biosynthesis. Catalyzes the first committed step in the biosynthesis of AMP from IMP. This is Adenylosuccinate synthetase from Lacticaseibacillus casei (strain BL23) (Lactobacillus casei).